The primary structure comprises 223 residues: Exosome complex component RRP46 (223 aa).

This sequence belongs to the RNase PH family. In terms of assembly, component of the RNA exosome complex. Specifically part of the catalytically inactive RNA exosome core complex (Exo-9) which may associate with the catalytic subunits RRP6 and DIS3 in cytoplasmic- and nuclear-specific RNA exosome complex forms. Exo-9 is formed by a hexameric base ring of RNase PH domain-containing subunits and a cap ring consisting of CSL4, RRP4 and RRP40.

The protein localises to the cytoplasm. Its subcellular location is the nucleus. It localises to the nucleolus. Its function is as follows. Non-catalytic component of the RNA exosome complex which has 3'-&gt;5' exoribonuclease activity and participates in a multitude of cellular RNA processing and degradation events. In the nucleus, the RNA exosome complex is involved in proper maturation of stable RNA species such as rRNA, snRNA and snoRNA, in the elimination of RNA processing by-products and non-coding 'pervasive' transcripts, such as antisense RNA species and cryptic unstable transcripts (CUTs), and of mRNAs with processing defects, thereby limiting or excluding their export to the cytoplasm. In the cytoplasm, the RNA exosome complex is involved in general mRNA turnover and in RNA surveillance pathways, preventing translation of aberrant mRNAs. The catalytic inactive RNA exosome core complex of 9 subunits (Exo-9) is proposed to play a pivotal role in the binding and presentation of RNA for ribonucleolysis, and to serve as a scaffold for the association with catalytic subunits and accessory proteins or complexes. RRP46 is part of the hexameric ring of RNase PH domain-containing subunits proposed to form a central channel which threads RNA substrates for degradation. This Saccharomyces cerevisiae (strain ATCC 204508 / S288c) (Baker's yeast) protein is Exosome complex component RRP46 (RRP46).